Reading from the N-terminus, the 364-residue chain is Histidinol-phosphate aminotransferase 1 (364 aa).

Lys211 carries the N6-(pyridoxal phosphate)lysine modification.

Belongs to the class-II pyridoxal-phosphate-dependent aminotransferase family. Histidinol-phosphate aminotransferase subfamily. As to quaternary structure, homodimer. Requires pyridoxal 5'-phosphate as cofactor.

The catalysed reaction is L-histidinol phosphate + 2-oxoglutarate = 3-(imidazol-4-yl)-2-oxopropyl phosphate + L-glutamate. It functions in the pathway amino-acid biosynthesis; L-histidine biosynthesis; L-histidine from 5-phospho-alpha-D-ribose 1-diphosphate: step 7/9. This chain is Histidinol-phosphate aminotransferase 1, found in Legionella pneumophila subsp. pneumophila (strain Philadelphia 1 / ATCC 33152 / DSM 7513).